The sequence spans 644 residues: Protein SNOWY COTYLEDON 3 (644 aa).

Disordered stretches follow at residues 1 to 129, 162 to 252, and 290 to 414; these read MVAA…TRTE, ETAT…DGRL, and SDTD…SRVR. Residues 53–77 show a composition bias toward low complexity; it reads SPSPSHSTTTTTTTATSTSTSSSSS. The segment covering 91–112 has biased composition (polar residues); that stretch reads LSRTTNSASNLVYTPSSLPKRS. Residues 172 to 190 are compositionally biased toward basic and acidic residues; it reads CTPERRRATPVRDQRENSK. 2 stretches are compositionally biased toward polar residues: residues 290–302 and 314–332; these read SDTD…STNG and TRSL…QETN. 2 stretches are compositionally biased toward low complexity: residues 343–370 and 397–412; these read SPQC…SSDS and ATAT…SPSR. Positions 463–466 match the QWRF motif motif; the sequence is QWRF.

The protein belongs to the QWRF family. As to expression, expressed in young developing tissues, such as seedlings, roots, flowers, buds and young siliques, and to a lesser extent in mature green tissues.

The protein localises to the peroxisome. Functionally, probable microtubule-associated peroxisomal protein required for chloroplast biogenesis and for the formation of the prolamellar body and prothylakoids in etioplasts. Not involved in peroxisomal metabolism, including mobilization of storage compounds during germination, fatty acid beta-oxydation or photorespiration. This chain is Protein SNOWY COTYLEDON 3 (SCO3), found in Arabidopsis thaliana (Mouse-ear cress).